Here is a 1083-residue protein sequence, read N- to C-terminus: Probable arabinosyltransferase B (1083 aa).

13 helical membrane passes run 23–45 (VARWVAAIAGLIGFVSSVVTPLL), 222–239 (FAMMLAIITTVGALVALW), 252–274 (LIPARWSMFTLVDVAVIFGFLLW), 331–350 (SMWIRLPDLICGVACWLLLS), 357–379 (LGPAIVGFKPALWAAGLVLLAAW), 421–443 (TAAFTIGIQPTGLIAVAALLAGG), 456–478 (AVGAWPLVAPLLAAGTVVLTVVF), 525–542 (FGFLITALCLFTAVLITL), 555–572 (AWRLIGTILGTMFFLTFA), 576–598 (WVHHFGLFAALGAAVAALTTVLV), 611–633 (AFLAALLFVMTLCFATTNGWWYV), 648–670 (DGITFSTIFFILFAIVALYAYYL), and 690–712 (FWAPIPFAAGLMTLVFIGSMVAG).

This sequence belongs to the emb family.

It localises to the cell membrane. In terms of biological role, arabinosyl transferase responsible for the polymerization of arabinose into the arabinan of arabinogalactan. In Mycobacterium leprae (strain TN), this protein is Probable arabinosyltransferase B (embB).